The following is a 98-amino-acid chain: Ribonuclease kappa (98 aa).

Helical transmembrane passes span 13-33 (ACGI…GIFF) and 65-85 (VSYN…FSFC).

It belongs to the RNase K family. In terms of assembly, interacts with the proton translocation complex V0 of the V-ATPase. Interacts with ATP6AP1. Expressed in brain (at protein level).

The protein localises to the endomembrane system. Its subcellular location is the cytoplasmic vesicle. It localises to the clathrin-coated vesicle membrane. In terms of biological role, endoribonuclease which preferentially cleaves ApU and ApG phosphodiester bonds. Hydrolyzes UpU bonds at a lower rate. Regulates the activity of vacuolar (H+)-ATPase (V-ATPase) which is responsible for acidifying and maintaining the pH of intracellular compartments. Required at an early stage of receptor-mediated endocytosis. This is Ribonuclease kappa (RNASEK) from Bos taurus (Bovine).